We begin with the raw amino-acid sequence, 840 residues long: Protein translocase subunit SecA (840 aa).

Residues Q85, 103–107 (GEGKT), and D492 each bind ATP. Residues 787–821 (QRERVAKETGASHGGDSQEIKKKPVKKEPKVGRND) form a disordered region. Over residues 802-819 (DSQEIKKKPVKKEPKVGR) the composition is skewed to basic and acidic residues. The Zn(2+) site is built by C823, C825, C834, and C835.

It belongs to the SecA family. Monomer and homodimer. Part of the essential Sec protein translocation apparatus which comprises SecA, SecYEG and auxiliary proteins SecDF. Other proteins may also be involved. Requires Zn(2+) as cofactor.

The protein localises to the cell membrane. Its subcellular location is the cytoplasm. It catalyses the reaction ATP + H2O + cellular proteinSide 1 = ADP + phosphate + cellular proteinSide 2.. Its function is as follows. Part of the Sec protein translocase complex. Interacts with the SecYEG preprotein conducting channel. Has a central role in coupling the hydrolysis of ATP to the transfer of proteins into and across the cell membrane, serving as an ATP-driven molecular motor driving the stepwise translocation of polypeptide chains across the membrane. The polypeptide is Protein translocase subunit SecA (Clostridium perfringens (strain 13 / Type A)).